Here is a 236-residue protein sequence, read N- to C-terminus: Leucyl/phenylalanyl-tRNA--protein transferase (236 aa).

The protein belongs to the L/F-transferase family.

Its subcellular location is the cytoplasm. The catalysed reaction is N-terminal L-lysyl-[protein] + L-leucyl-tRNA(Leu) = N-terminal L-leucyl-L-lysyl-[protein] + tRNA(Leu) + H(+). The enzyme catalyses N-terminal L-arginyl-[protein] + L-leucyl-tRNA(Leu) = N-terminal L-leucyl-L-arginyl-[protein] + tRNA(Leu) + H(+). It carries out the reaction L-phenylalanyl-tRNA(Phe) + an N-terminal L-alpha-aminoacyl-[protein] = an N-terminal L-phenylalanyl-L-alpha-aminoacyl-[protein] + tRNA(Phe). Its function is as follows. Functions in the N-end rule pathway of protein degradation where it conjugates Leu, Phe and, less efficiently, Met from aminoacyl-tRNAs to the N-termini of proteins containing an N-terminal arginine or lysine. The polypeptide is Leucyl/phenylalanyl-tRNA--protein transferase (Yersinia pseudotuberculosis serotype O:1b (strain IP 31758)).